The sequence spans 638 residues: XK-related protein 6 (638 aa).

Disordered stretches follow at residues V24–G43 and R82–P117. Over residues P33–G43 the composition is skewed to gly residues. Helical transmembrane passes span L127–A147, C158–F178, T315–Y335, V369–V389, W410–V430, M439–F459, and A470–L490.

This sequence belongs to the XK family.

It localises to the cell membrane. The protein is XK-related protein 6 of Mus musculus (Mouse).